The chain runs to 137 residues: MKPSERRKARHCATQAIYQWQMTRANVGDIEEQFKIDQDTKGVDLNYFRDLLFGVALHCNELDKVFAPFLSRPLEEVDMVDKAILRLATYELTRRDDVPPRVVINEAIELAKAFAADDSHKFVNGVLDKVIKTLNKR.

The protein belongs to the NusB family.

Its function is as follows. Involved in transcription antitermination. Required for transcription of ribosomal RNA (rRNA) genes. Binds specifically to the boxA antiterminator sequence of the ribosomal RNA (rrn) operons. The polypeptide is Transcription antitermination protein NusB (Aeromonas salmonicida (strain A449)).